Here is a 179-residue protein sequence, read N- to C-terminus: Large ribosomal subunit protein uL5 (179 aa).

It belongs to the universal ribosomal protein uL5 family. Part of the 50S ribosomal subunit; part of the 5S rRNA/L5/L18/L25 subcomplex. Contacts the 5S rRNA and the P site tRNA. Forms a bridge to the 30S subunit in the 70S ribosome.

This is one of the proteins that bind and probably mediate the attachment of the 5S RNA into the large ribosomal subunit, where it forms part of the central protuberance. In the 70S ribosome it contacts protein S13 of the 30S subunit (bridge B1b), connecting the 2 subunits; this bridge is implicated in subunit movement. Contacts the P site tRNA; the 5S rRNA and some of its associated proteins might help stabilize positioning of ribosome-bound tRNAs. The sequence is that of Large ribosomal subunit protein uL5 from Shewanella woodyi (strain ATCC 51908 / MS32).